Here is a 37-residue protein sequence, read N- to C-terminus: Large ribosomal subunit protein bL36 (37 aa).

Belongs to the bacterial ribosomal protein bL36 family.

This Mycoplasma pneumoniae (strain ATCC 29342 / M129 / Subtype 1) (Mycoplasmoides pneumoniae) protein is Large ribosomal subunit protein bL36.